A 241-amino-acid chain; its full sequence is Proteasome subunit alpha type-5 (241 aa).

It belongs to the peptidase T1A family. The 26S proteasome consists of a 20S proteasome core and two 19S regulatory subunits. The 20S proteasome core is composed of 28 subunits that are arranged in four stacked rings, resulting in a barrel-shaped structure. The two end rings are each formed by seven alpha subunits, and the two central rings are each formed by seven beta subunits. The catalytic chamber with the active sites is on the inside of the barrel.

The protein localises to the cytoplasm. The protein resides in the nucleus. The proteasome is a multicatalytic proteinase complex which is characterized by its ability to cleave peptides with Arg, Phe, Tyr, Leu, and Glu adjacent to the leaving group at neutral or slightly basic pH. The proteasome has an ATP-dependent proteolytic activity. The polypeptide is Proteasome subunit alpha type-5 (psmA5) (Dictyostelium discoideum (Social amoeba)).